Consider the following 511-residue polypeptide: Histidine ammonia-lyase 2 (511 aa).

Residues serine 144 to glycine 146 constitute a cross-link (5-imidazolinone (Ser-Gly)). Serine 145 bears the 2,3-didehydroalanine (Ser) mark.

It belongs to the PAL/histidase family. In terms of processing, contains an active site 4-methylidene-imidazol-5-one (MIO), which is formed autocatalytically by cyclization and dehydration of residues Ser-Ser-Gly.

The protein localises to the cytoplasm. It carries out the reaction L-histidine = trans-urocanate + NH4(+). Its pathway is amino-acid degradation; L-histidine degradation into L-glutamate; N-formimidoyl-L-glutamate from L-histidine: step 1/3. The chain is Histidine ammonia-lyase 2 (hutH2) from Fusobacterium nucleatum subsp. nucleatum (strain ATCC 25586 / DSM 15643 / BCRC 10681 / CIP 101130 / JCM 8532 / KCTC 2640 / LMG 13131 / VPI 4355).